The sequence spans 149 residues: Putative pre-16S rRNA nuclease (149 aa).

Belongs to the YqgF nuclease family.

Its subcellular location is the cytoplasm. Functionally, could be a nuclease involved in processing of the 5'-end of pre-16S rRNA. The chain is Putative pre-16S rRNA nuclease from Pseudoalteromonas translucida (strain TAC 125).